The primary structure comprises 926 residues: Lipoxygenase 4, chloroplastic (926 aa).

A chloroplast-targeting transit peptide spans 1–58 (MALANEIMGSRLIFERSSSLASPFHSRFSIKKKTQRTQFSINPFDPRPMRAVNSSGVV). One can recognise a PLAT domain in the interval 106–228 (FKETLVKHLD…DHPSKRILFT (123 aa)). Positions 231–926 (PYLPSETPSG…CRGVPNSVSI (696 aa)) constitute a Lipoxygenase domain. Residues histidine 585, histidine 590, histidine 777, asparagine 781, and isoleucine 926 each contribute to the Fe cation site.

Belongs to the lipoxygenase family. Requires Fe cation as cofactor. Expressed in leaves.

The protein localises to the plastid. The protein resides in the chloroplast. It carries out the reaction (9Z,12Z)-octadecadienoate + O2 = (13S)-hydroperoxy-(9Z,11E)-octadecadienoate. It catalyses the reaction (9Z,12Z,15Z)-octadecatrienoate + O2 = (13S)-hydroperoxy-(9Z,11E,15Z)-octadecatrienoate. The protein operates within lipid metabolism; oxylipin biosynthesis. In terms of biological role, plant lipoxygenases may be involved in a number of diverse aspects of plant physiology including growth and development, pest resistance, and senescence or responses to wounding. Catalyzes the hydroperoxidation of lipids containing a cis,cis-1,4-pentadiene structure. 13S-lipoxygenase that can use linolenic acid as substrates. The chain is Lipoxygenase 4, chloroplastic (LOX4) from Arabidopsis thaliana (Mouse-ear cress).